A 293-amino-acid polypeptide reads, in one-letter code: N-acetylneuraminate lyase (293 aa).

Aceneuramate is bound by residues Ser47 and Thr48. Catalysis depends on Tyr136, which acts as the Proton donor. Lys164 serves as the catalytic Schiff-base intermediate with substrate. Aceneuramate is bound by residues Thr166, Gly188, Asp190, Glu191, and Ser207.

This sequence belongs to the DapA family. NanA subfamily. Homotetramer.

It localises to the cytoplasm. The enzyme catalyses aceneuramate = aldehydo-N-acetyl-D-mannosamine + pyruvate. It functions in the pathway amino-sugar metabolism; N-acetylneuraminate degradation; D-fructose 6-phosphate from N-acetylneuraminate: step 1/5. Functionally, catalyzes the reversible aldol cleavage of N-acetylneuraminic acid (sialic acid; Neu5Ac) to form pyruvate and N-acetylmannosamine (ManNAc) via a Schiff base intermediate. In Haemophilus influenzae (strain ATCC 51907 / DSM 11121 / KW20 / Rd), this protein is N-acetylneuraminate lyase.